The primary structure comprises 342 residues: Cell division protein FtsQ (342 aa).

Residues 1–80 (MDGAGSLTRS…ALVERYLPRR (80 aa)) lie on the Cytoplasmic side of the membrane. A helical membrane pass occupies residues 81–99 (VGISMTVLLLIGSCGFGIV). Residues 100 to 342 (KGGHLQDFVT…KKKKKAGDAA (243 aa)) lie on the Periplasmic side of the membrane. Positions 124 to 192 (FRITSVVING…GQLMIELTER (69 aa)) constitute a POTRA domain.

Belongs to the FtsQ/DivIB family. FtsQ subfamily.

It is found in the cell inner membrane. Its function is as follows. Essential cell division protein. The polypeptide is Cell division protein FtsQ (Bradyrhizobium diazoefficiens (strain JCM 10833 / BCRC 13528 / IAM 13628 / NBRC 14792 / USDA 110)).